The primary structure comprises 199 residues: Prolactin-1 (199 aa).

3 disulfide bridges follow: cysteine 4/cysteine 11, cysteine 58/cysteine 174, and cysteine 191/cysteine 199. An N-linked (GlcNAc...) asparagine glycan is attached at asparagine 60.

This sequence belongs to the somatotropin/prolactin family. Glycosylated.

It is found in the secreted. This Crocodylus novaeguineae (Crocodile) protein is Prolactin-1.